The following is a 60-amino-acid chain: Large ribosomal subunit protein bL32A (60 aa).

The span at 1 to 19 (MAVPKRRMSRSNTRSRRSQ) shows a compositional bias: basic residues. The interval 1-21 (MAVPKRRMSRSNTRSRRSQWK) is disordered.

It belongs to the bacterial ribosomal protein bL32 family.

This Nocardia farcinica (strain IFM 10152) protein is Large ribosomal subunit protein bL32A.